Consider the following 328-residue polypeptide: Methionine import ATP-binding protein MetN 1 (328 aa).

The ABC transporter domain maps to 2–241 (ISIERLSKTY…PLSRLGRSLL (240 aa)). An ATP-binding site is contributed by 38–45 (GRSGAGKS).

The protein belongs to the ABC transporter superfamily. Methionine importer (TC 3.A.1.24) family. The complex is composed of two ATP-binding proteins (MetN), two transmembrane proteins (MetI) and a solute-binding protein (MetQ).

Its subcellular location is the cell inner membrane. It catalyses the reaction L-methionine(out) + ATP + H2O = L-methionine(in) + ADP + phosphate + H(+). It carries out the reaction D-methionine(out) + ATP + H2O = D-methionine(in) + ADP + phosphate + H(+). In terms of biological role, part of the ABC transporter complex MetNIQ involved in methionine import. Responsible for energy coupling to the transport system. The polypeptide is Methionine import ATP-binding protein MetN 1 (Yersinia pestis bv. Antiqua (strain Nepal516)).